The chain runs to 365 residues: Protein RecA (365 aa).

Residue 81–88 participates in ATP binding; it reads GPESSGKT.

This sequence belongs to the RecA family.

The protein localises to the cytoplasm. Functionally, can catalyze the hydrolysis of ATP in the presence of single-stranded DNA, the ATP-dependent uptake of single-stranded DNA by duplex DNA, and the ATP-dependent hybridization of homologous single-stranded DNAs. It interacts with LexA causing its activation and leading to its autocatalytic cleavage. This Borreliella afzelii (strain PKo) (Borrelia afzelii) protein is Protein RecA.